A 175-amino-acid chain; its full sequence is SsrA-binding protein (175 aa).

It belongs to the SmpB family.

Its subcellular location is the cytoplasm. Functionally, required for rescue of stalled ribosomes mediated by trans-translation. Binds to transfer-messenger RNA (tmRNA), required for stable association of tmRNA with ribosomes. tmRNA and SmpB together mimic tRNA shape, replacing the anticodon stem-loop with SmpB. tmRNA is encoded by the ssrA gene; the 2 termini fold to resemble tRNA(Ala) and it encodes a 'tag peptide', a short internal open reading frame. During trans-translation Ala-aminoacylated tmRNA acts like a tRNA, entering the A-site of stalled ribosomes, displacing the stalled mRNA. The ribosome then switches to translate the ORF on the tmRNA; the nascent peptide is terminated with the 'tag peptide' encoded by the tmRNA and targeted for degradation. The ribosome is freed to recommence translation, which seems to be the essential function of trans-translation. This is SsrA-binding protein from Prochlorococcus marinus subsp. pastoris (strain CCMP1986 / NIES-2087 / MED4).